The sequence spans 1043 residues: Probable inorganic carbon transporter subunit DabA (1043 aa).

Positions 460, 462, 719, and 734 each coordinate Zn(2+).

This sequence belongs to the inorganic carbon transporter (TC 9.A.2) DabA family. As to quaternary structure, forms a complex with DabB. Requires Zn(2+) as cofactor.

The protein resides in the cell inner membrane. Its function is as follows. Part of an energy-coupled inorganic carbon pump. The polypeptide is Probable inorganic carbon transporter subunit DabA (Thiobacillus denitrificans (strain ATCC 25259 / T1)).